A 372-amino-acid polypeptide reads, in one-letter code: N-methyl-L-tryptophan oxidase (372 aa).

4–34 serves as a coordination point for FAD; it reads DLIIIGSGSVGAAAGYYATRAGLNVLMTDAH. Cysteine 308 carries the S-8alpha-FAD cysteine modification.

It belongs to the MSOX/MTOX family. MTOX subfamily. As to quaternary structure, monomer. It depends on FAD as a cofactor.

The catalysed reaction is N(alpha)-methyl-L-tryptophan + O2 + H2O = L-tryptophan + formaldehyde + H2O2. Catalyzes the oxidative demethylation of N-methyl-L-tryptophan. This Escherichia coli O81 (strain ED1a) protein is N-methyl-L-tryptophan oxidase.